Here is a 1064-residue protein sequence, read N- to C-terminus: Alpha-aminoadipic semialdehyde synthase (1064 aa).

Positions 24 to 445 are lysine-ketoglutarate reductase; the sequence is VNKWERRTPL…RACISYRGEL (422 aa). Phosphothreonine is present on Thr238. Ser458 carries the post-translational modification Phosphoserine. The saccharopine dehydrogenase stretch occupies residues 583-1064; the sequence is MTKKSGVLIL…YGIKLMEKAE (482 aa). Residues 703 to 704, Asp730, Arg830, and 852 to 854 each bind L-saccharopine; these read SY and TLR. 729-731 provides a ligand contact to NADP(+); it reads LDP.

It in the N-terminal section; belongs to the AlaDH/PNT family. In the C-terminal section; belongs to the saccharopine dehydrogenase family. As to quaternary structure, homodimer. Post-translationally, phosphorylation of Ser-458 seems important for the LKR activity. As to expression, ubiquitous, with higher levels in flowers. Isoform Long is mostly present in young leaves, cotyledons, root tips and mature root parts. Whereas isoform Short is mostly expressed in cotyledons and at low levels in all root parts.

It is found in the cytoplasm. It catalyses the reaction L-saccharopine + NADP(+) + H2O = L-lysine + 2-oxoglutarate + NADPH + H(+). The catalysed reaction is L-saccharopine + NAD(+) + H2O = (S)-2-amino-6-oxohexanoate + L-glutamate + NADH + H(+). It functions in the pathway amino-acid degradation; L-lysine degradation via saccharopine pathway; glutaryl-CoA from L-lysine: step 1/6. The protein operates within amino-acid degradation; L-lysine degradation via saccharopine pathway; glutaryl-CoA from L-lysine: step 2/6. With respect to regulation, the LKR activity is stimulated by NaCl. Its function is as follows. Bifunctional enzyme that catalyzes the first two steps in lysine degradation. The N-terminal and the C-terminal contain lysine-oxoglutarate reductase and saccharopine dehydrogenase activity, respectively. Negatively regulates free Lys accumulation in seeds. The chain is Alpha-aminoadipic semialdehyde synthase (LKR/SDH) from Arabidopsis thaliana (Mouse-ear cress).